Consider the following 143-residue polypeptide: Small ribosomal subunit protein uS12 (143 aa).

Over residues M1–Q20 the composition is skewed to basic residues. The tract at residues M1–Q26 is disordered. Residue K37 forms a Glycyl lysine isopeptide (Lys-Gly) (interchain with G-Cter in SUMO2) linkage. K54 is modified (N6-succinyllysine). 3-hydroxyproline is present on P62. An N6-acetyllysine modification is found at K135.

The protein belongs to the universal ribosomal protein uS12 family. Component of the 40S small ribosomal subunit. Part of the small subunit (SSU) processome, composed of more than 70 proteins and the RNA chaperone small nucleolar RNA (snoRNA) U3. Hydroxylation at Pro-62 affects translation termination efficiency.

It is found in the cytoplasm. The protein resides in the cytosol. It localises to the rough endoplasmic reticulum. Its subcellular location is the nucleus. The protein localises to the nucleolus. In terms of biological role, component of the ribosome, a large ribonucleoprotein complex responsible for the synthesis of proteins in the cell. The small ribosomal subunit (SSU) binds messenger RNAs (mRNAs) and translates the encoded message by selecting cognate aminoacyl-transfer RNA (tRNA) molecules. The large subunit (LSU) contains the ribosomal catalytic site termed the peptidyl transferase center (PTC), which catalyzes the formation of peptide bonds, thereby polymerizing the amino acids delivered by tRNAs into a polypeptide chain. The nascent polypeptides leave the ribosome through a tunnel in the LSU and interact with protein factors that function in enzymatic processing, targeting, and the membrane insertion of nascent chains at the exit of the ribosomal tunnel. Plays an important role in translational accuracy. Part of the small subunit (SSU) processome, first precursor of the small eukaryotic ribosomal subunit. During the assembly of the SSU processome in the nucleolus, many ribosome biogenesis factors, an RNA chaperone and ribosomal proteins associate with the nascent pre-rRNA and work in concert to generate RNA folding, modifications, rearrangements and cleavage as well as targeted degradation of pre-ribosomal RNA by the RNA exosome. This chain is Small ribosomal subunit protein uS12 (RPS23), found in Bos taurus (Bovine).